Reading from the N-terminus, the 410-residue chain is Putative ribosomal large subunit pseudouridine synthase SVR1, chloroplastic (410 aa).

A chloroplast-targeting transit peptide spans 1–35 (MASVAASSSISFAASFLKIKAFPLSPRFFPIRTLR). The interval 96 to 143 (HNLAIDATTQNPKKKDKSKKKQPQATSSSSATTTASSPASHSEVKPKL) is disordered. The span at 107-117 (PKKKDKSKKKQ) shows a compositional bias: basic residues. Residues 118 to 135 (PQATSSSSATTTASSPAS) show a composition bias toward low complexity. Residues 160 to 229 (QRLSKVLAAA…PKVYFALNKP (70 aa)) form the S4 RNA-binding domain. Catalysis depends on Asp-274, which acts as the Nucleophile.

It belongs to the pseudouridine synthase RsuA family. In terms of tissue distribution, highly expressed in young seedlings. Expressed in roots, rosette leaves, cauline leaves, stems and flowers.

It is found in the plastid. It localises to the chloroplast. Responsible for synthesis of pseudouridine in chloroplastic 23S ribosomal RNA. Necessary for normal chloroplast rRNA processing and translation. Required for normal chloroplast development and maintenance. May function in other plastids, such as root amyloplasts. This is Putative ribosomal large subunit pseudouridine synthase SVR1, chloroplastic (SVR1) from Arabidopsis thaliana (Mouse-ear cress).